We begin with the raw amino-acid sequence, 479 residues long: MAQHTVYFPDAFLTQMREAMPSTLSFDDFLAACQRPLRRSIRVNTLKISVADFLQLTASYGWTLTPIPWCEEGFWIERDDEDALPLGSTAEHLSGLFYIQEASSMLPVAALFADGNAPQRVMDVAAAPGSKTTQIAARMNNEGAILANEFSASRVKVLHANISRCGIRNVALTHFDGRVFGAALPEMFDAILLDAPCSGEGVVRKDPDALKNWSPESNQEIAATQRELIDSAFHALCPGGTLVYSTCTLNQEENEAVCRWLKETYPDAVEFLPLGDLFPGANKALTEEGFLHVFPQIYDCEGFFVARLRKTQAIPALPAPKYKVGNFPFSPVKDREAGQIRQAAAGVGLNWDENLRLWQRDKELWLFPVGIEALIGKVRFSRLGIKLAETHNKGYRWQHEAVIALASPDNMNAFELTPQEAEEWYRGRDVYPQAAPVADDVLVTFQHQPIGLAKRIGSRLKNSYPRELVRDGKLFTGNA.

S-adenosyl-L-methionine is bound by residues 125-131 (AAAPGSK), E149, D176, and D194. Residue C247 is the Nucleophile of the active site.

The protein belongs to the class I-like SAM-binding methyltransferase superfamily. RsmB/NOP family.

The protein resides in the cytoplasm. It catalyses the reaction cytidine(1407) in 16S rRNA + S-adenosyl-L-methionine = 5-methylcytidine(1407) in 16S rRNA + S-adenosyl-L-homocysteine + H(+). Its function is as follows. Specifically methylates the cytosine at position 1407 (m5C1407) of 16S rRNA. The polypeptide is Ribosomal RNA small subunit methyltransferase F (Escherichia coli O17:K52:H18 (strain UMN026 / ExPEC)).